Reading from the N-terminus, the 196-residue chain is Pyridoxal 5'-phosphate synthase subunit PdxT (196 aa).

Residue 52–54 (GES) coordinates L-glutamine. Catalysis depends on Cys84, which acts as the Nucleophile. L-glutamine is bound by residues Arg113 and 141–142 (IR). Catalysis depends on charge relay system residues His178 and Glu180.

The protein belongs to the glutaminase PdxT/SNO family. As to quaternary structure, in the presence of PdxS, forms a dodecamer of heterodimers. Only shows activity in the heterodimer.

The enzyme catalyses aldehydo-D-ribose 5-phosphate + D-glyceraldehyde 3-phosphate + L-glutamine = pyridoxal 5'-phosphate + L-glutamate + phosphate + 3 H2O + H(+). It carries out the reaction L-glutamine + H2O = L-glutamate + NH4(+). The protein operates within cofactor biosynthesis; pyridoxal 5'-phosphate biosynthesis. In terms of biological role, catalyzes the hydrolysis of glutamine to glutamate and ammonia as part of the biosynthesis of pyridoxal 5'-phosphate. The resulting ammonia molecule is channeled to the active site of PdxS. In Pyrococcus horikoshii (strain ATCC 700860 / DSM 12428 / JCM 9974 / NBRC 100139 / OT-3), this protein is Pyridoxal 5'-phosphate synthase subunit PdxT.